Consider the following 317-residue polypeptide: Apolipoprotein E (317 aa).

An N-terminal signal peptide occupies residues Met1–Ala18. 8 repeat units span residues Thr80–Ser101, Pro102–Gly123, Ala124–Gly145, Gln146–Leu167, Arg168–Glu189, Arg190–Ala211, Thr212–Arg233, and Ala234–Ala255. The interval Thr80–Ala255 is 8 X 22 AA approximate tandem repeats. A Methionine sulfoxide modification is found at Met143. The residue at position 147 (Ser147) is a Phosphoserine. The segment at His158–Arg168 is LDL and other lipoprotein receptors binding. Position 162-165 (Leu162–Arg165) interacts with heparin. A lipid-binding and lipoprotein association region spans residues Ala210 to Met290. Gly229 to Met236 contacts heparin. The homooligomerization stretch occupies residues Gln266–His317. Residues Arg278–Met290 are specificity for association with VLDL.

Belongs to the apolipoprotein A1/A4/E family. In terms of assembly, homotetramer. May interact with ABCA1; functionally associated with ABCA1 in the biogenesis of HDLs. May interact with APP/A4 amyloid-beta peptide; the interaction is extremely stable in vitro but its physiological significance is unclear. May interact with MAPT. May interact with MAP2. In the cerebrospinal fluid, interacts with secreted SORL1. Interacts with PMEL; this allows the loading of PMEL luminal fragment on ILVs to induce fibril nucleation. In terms of processing, APOE exists as multiple glycosylated and sialylated glycoforms within cells and in plasma. The extent of glycosylation and sialylation are tissue and context specific. Glycated in plasma VLDL. Post-translationally, phosphorylated by FAM20C in the extracellular medium.

The protein localises to the secreted. Its subcellular location is the extracellular space. It is found in the extracellular matrix. The protein resides in the extracellular vesicle. It localises to the endosome. The protein localises to the multivesicular body. Functionally, APOE is an apolipoprotein, a protein associating with lipid particles, that mainly functions in lipoprotein-mediated lipid transport between organs via the plasma and interstitial fluids. APOE is a core component of plasma lipoproteins and is involved in their production, conversion and clearance. Apolipoproteins are amphipathic molecules that interact both with lipids of the lipoprotein particle core and the aqueous environment of the plasma. As such, APOE associates with chylomicrons, chylomicron remnants, very low density lipoproteins (VLDL) and intermediate density lipoproteins (IDL) but shows a preferential binding to high-density lipoproteins (HDL). It also binds a wide range of cellular receptors including the LDL receptor/LDLR, the LDL receptor-related proteins LRP1, LRP2 and LRP8 and the very low-density lipoprotein receptor/VLDLR that mediate the cellular uptake of the APOE-containing lipoprotein particles. Finally, APOE also has a heparin-binding activity and binds heparan-sulfate proteoglycans on the surface of cells, a property that supports the capture and the receptor-mediated uptake of APOE-containing lipoproteins by cells. A main function of APOE is to mediate lipoprotein clearance through the uptake of chylomicrons, VLDLs, and HDLs by hepatocytes. APOE is also involved in the biosynthesis by the liver of VLDLs as well as their uptake by peripheral tissues ensuring the delivery of triglycerides and energy storage in muscle, heart and adipose tissues. By participating in the lipoprotein-mediated distribution of lipids among tissues, APOE plays a critical role in plasma and tissues lipid homeostasis. APOE is also involved in two steps of reverse cholesterol transport, the HDLs-mediated transport of cholesterol from peripheral tissues to the liver, and thereby plays an important role in cholesterol homeostasis. First, it is functionally associated with ABCA1 in the biogenesis of HDLs in tissues. Second, it is enriched in circulating HDLs and mediates their uptake by hepatocytes. APOE also plays an important role in lipid transport in the central nervous system, regulating neuron survival and sprouting. This is Apolipoprotein E (APOE) from Theropithecus gelada (Gelada baboon).